We begin with the raw amino-acid sequence, 337 residues long: tRNA N6-adenosine threonylcarbamoyltransferase (337 aa).

Fe cation contacts are provided by H114 and H118. Residues 136–140 (LVSGG), D169, G182, D186, and N275 each bind substrate. Residue D301 participates in Fe cation binding.

It belongs to the KAE1 / TsaD family. Requires Fe(2+) as cofactor.

It localises to the cytoplasm. It carries out the reaction L-threonylcarbamoyladenylate + adenosine(37) in tRNA = N(6)-L-threonylcarbamoyladenosine(37) in tRNA + AMP + H(+). In terms of biological role, required for the formation of a threonylcarbamoyl group on adenosine at position 37 (t(6)A37) in tRNAs that read codons beginning with adenine. Is involved in the transfer of the threonylcarbamoyl moiety of threonylcarbamoyl-AMP (TC-AMP) to the N6 group of A37, together with TsaE and TsaB. TsaD likely plays a direct catalytic role in this reaction. This Streptococcus thermophilus (strain ATCC BAA-491 / LMD-9) protein is tRNA N6-adenosine threonylcarbamoyltransferase.